The primary structure comprises 880 residues: MTNELTPKFNPTEVEAGRYEKWLEADVFKPSGNPDAEPYSIVIPPPNVTGKLHLGHAWDTTLQDIIIRQKRMQGFDTLWLPGMDHAGIATQAKVAARLAEDGILPQDLGREKFLDKVWEWKDEYATTIKEQWGKMGISVDYSRERFTLDEGLSQAVRKVFVQLYNKGWIYRGEKLINWDPKAMTALSDIEVIHKEIDGAFYHITYQIEGSDEFVEIATTRPETFLGDTAVIVNEKDERYKHLVGKNVILPIINRVIPILTDDHADMEKGTGVVKITPAHDPNDFEVAMRHDLPMINMMNNDGTINENGGKYEGLDRFEARKQIVADLKELGQLVDIKPVRHEVGHSERTGVVVEPRLSTQWFVKMDELAKNAIANQTTEDAVEFYPPRFNDTFMQWMENVHDWVISRQLWWGHQIPAWYNEAGEMYVGEEAPEGEGWTQDEDVLDTWFSSALWPFSTMGWPDENSADFIRYFPTSTLVTGYDIIFFWVSRMIFQSLEFTGKSPFHNVLIHGLIRDEEGRKMSKSLGNGIDPMDVIEKYGADALRWFLSNGSAPGQDVRFSYDKMDAAWNFINKIWNVSRYILMNAEDISADAVSSALTKVANKTAGNVTDRWILTRLNDTVERVTEQMDKFEFGVAGHILYNFIWDEFANWYLELTKEVMFGEDEAEKDITRAVLLHVLDQVLRLLHPIMPFFTEEIFEKLPNTSGSIVVAEYPKVRPEFNDDKASEGVAMLIELITAVRNIRAEVNTPLSKAVPMLIKSEHADFLNAVSPYISRFTNPSELTIAKDLAVPEQAMSAVITGAELYLPLAGLINIEEEIARLEKELAKWQKELDLVNKKLGNERFVANAKAEVVQKEKDKLADYQEKFDTVKARIAELKEN.

The 'HIGH' region motif lies at 46-56; sequence PNVTGKLHLGH. Residues 520 to 524 carry the 'KMSKS' region motif; sequence KMSKS. K523 contributes to the ATP binding site. A coiled-coil region spans residues 808–880; sequence LAGLINIEEE…KARIAELKEN (73 aa).

It belongs to the class-I aminoacyl-tRNA synthetase family. ValS type 1 subfamily. In terms of assembly, monomer.

It localises to the cytoplasm. The enzyme catalyses tRNA(Val) + L-valine + ATP = L-valyl-tRNA(Val) + AMP + diphosphate. Functionally, catalyzes the attachment of valine to tRNA(Val). As ValRS can inadvertently accommodate and process structurally similar amino acids such as threonine, to avoid such errors, it has a 'posttransfer' editing activity that hydrolyzes mischarged Thr-tRNA(Val) in a tRNA-dependent manner. This is Valine--tRNA ligase from Lactococcus lactis subsp. lactis (strain IL1403) (Streptococcus lactis).